A 290-amino-acid chain; its full sequence is Small ribosomal subunit protein bS6 (290 aa).

The segment at 208 to 233 (VEEAKTTAKKPAAPKMSAAERAKVDG) is disordered.

The protein belongs to the bacterial ribosomal protein bS6 family.

In terms of biological role, binds together with bS18 to 16S ribosomal RNA. In Mesoplasma florum (strain ATCC 33453 / NBRC 100688 / NCTC 11704 / L1) (Acholeplasma florum), this protein is Small ribosomal subunit protein bS6.